The primary structure comprises 838 residues: MGKKGKVGKSRRDKFYHLAKETGYRSRSAFKLIQLNRRFQFLQKARALLDLCAAPGGWLQVAAKFMPVSSLIVGVDLVPIKPLPNVVTLQEDITTERCRQALRKELKTWKVDVVLNDGAPNVGASWVHDAYSQAHLTLMALRLACDFLARGGCFITKVFRSRDYQPLLWIFQQLFHRVQATKPQASRHESAEIFVVCQGFLAPDKVDAKFFDPKFAFKEVEVQAKTVTELVTKKKPKAEGYAEGDLTLYHRTSVTDFLRAANPVDFLSKASEISIDDEELAQHPATTEDIRVCCQDIKVLGRKELRSLLNWRTKLRRYVAKKLKEQAKALDISLSSEEEEEGDEEEAVAETKQAPEEEEEREEEQLNRTLAEMKAQEVAELKRKKKKLLREQRKQRERVELKMDLPGVSIADEGETGMFSLRTIRGQQLLEEVTQGDMNAADTFLSDLPRDDIYVSDAEDDDDTSLESDLDPEELAGVRTHSDLKEQKYLRFTQVDDNKEEEGENPLLVPLEEKAVLQEEQASLWFSKDGFSGIEDDADEALEISQAQLLYKSRQKEQQPTDPPPPPTNLKTEKKSPQGQNEVPKETEAILGTEAVTDPGGEERGNSSDSDSSSSEDEDSWKVSRGVKRGRGSKADEDGFEVVPIQDPVKYRILDPEGLALGAVIASSKKAKRDLIDNSFNRYAFNEEEGELPEWFAQEEKQHRIRQLPVDKKEVEHYRKRWREINARPIKKVAEAKARKKRRVLKKLEQTKKKAEAVVNTVDISEREKVAQLRSLYKKAGLGKEKRQVTYVVAKKGVGRKVRRPAGVKGHFKVVDSRMKKDQRAQQRKEQKKKHKRK.

S-adenosyl-L-methionine is bound by residues Gly-56, Trp-58, Asp-76, Asp-92, and Asp-117. Lys-157 serves as the catalytic Proton acceptor. A disordered region spans residues 332 to 367; that stretch reads ISLSSEEEEEGDEEEAVAETKQAPEEEEEREEEQLN. Phosphoserine occurs at positions 333, 335, and 336. Over residues 336 to 348 the composition is skewed to acidic residues; that stretch reads SEEEEEGDEEEAV. Arg-390 carries the citrulline modification. The disordered stretch occupies residues 453 to 482; the sequence is IYVSDAEDDDDTSLESDLDPEELAGVRTHS. A compositionally biased stretch (acidic residues) spans 457-474; the sequence is DAEDDDDTSLESDLDPEE. A phosphoserine mark is found at Ser-532 and Ser-545. The interval 537–639 is disordered; the sequence is DADEALEISQ…GRGSKADEDG (103 aa). A Glycyl lysine isopeptide (Lys-Gly) (interchain with G-Cter in SUMO2) cross-link involves residue Lys-571. At Ser-576 the chain carries Phosphoserine. Residues Lys-634 and Lys-650 each participate in a glycyl lysine isopeptide (Lys-Gly) (interchain with G-Cter in SUMO2) cross-link. Ser-667 is modified (phosphoserine). Lys-669 participates in a covalent cross-link: Glycyl lysine isopeptide (Lys-Gly) (interchain with G-Cter in SUMO2). Ser-679 bears the Phosphoserine mark. Residue Lys-701 forms a Glycyl lysine isopeptide (Lys-Gly) (interchain with G-Cter in SUMO2) linkage. Residues 730–768 adopt a coiled-coil conformation; sequence IKKVAEAKARKKRRVLKKLEQTKKKAEAVVNTVDISERE. Citrulline is present on Arg-774. Positions 802 to 812 are enriched in basic residues; it reads VRRPAGVKGHF. Residues 802–838 form a disordered region; that stretch reads VRRPAGVKGHFKVVDSRMKKDQRAQQRKEQKKKHKRK. The span at 813 to 829 shows a compositional bias: basic and acidic residues; it reads KVVDSRMKKDQRAQQRK.

The protein belongs to the class I-like SAM-binding methyltransferase superfamily. RNA methyltransferase RlmE family. SPB1 subfamily. In terms of assembly, interacts with NIP7. Citrullinated by PADI4.

Its subcellular location is the nucleus. It is found in the nucleolus. It catalyses the reaction a ribonucleotide in rRNA + S-adenosyl-L-methionine = a 2'-O-methylribonucleotide in rRNA + S-adenosyl-L-homocysteine + H(+). In terms of biological role, RNA 2'-O-methyltransferase involved in the processing of the 34S pre-rRNA to 18S rRNA and in 40S ribosomal subunit formation. This chain is pre-rRNA 2'-O-ribose RNA methyltransferase FTSJ3 (Ftsj3), found in Mus musculus (Mouse).